The sequence spans 789 residues: Phenylalanine--tRNA ligase beta subunit (789 aa).

One can recognise a tRNA-binding domain in the interval 38 to 151 (KKHLQSFVVV…NTYNVGESFF (114 aa)). The B5 domain maps to 398–474 (HNDILLNFSP…RLYGYDKILE (77 aa)). Aspartate 452, aspartate 458, glutamate 461, and glutamate 462 together coordinate Mg(2+). The region spanning 694 to 787 (LRYQSVKRDF…ISKGFNGILR (94 aa)) is the FDX-ACB domain.

This sequence belongs to the phenylalanyl-tRNA synthetase beta subunit family. Type 1 subfamily. Tetramer of two alpha and two beta subunits. Mg(2+) serves as cofactor.

It localises to the cytoplasm. It catalyses the reaction tRNA(Phe) + L-phenylalanine + ATP = L-phenylalanyl-tRNA(Phe) + AMP + diphosphate + H(+). In Ehrlichia ruminantium (strain Welgevonden), this protein is Phenylalanine--tRNA ligase beta subunit.